Consider the following 234-residue polypeptide: Probable cyclic nucleotide phosphodiesterase Rmag_0669 (234 aa).

Fe cation contacts are provided by Asp11, His13, Asp49, Asn79, His145, His184, and His186. AMP is bound by residues His13, Asp49, and Asn79 to His80. His186 serves as a coordination point for AMP.

Belongs to the cyclic nucleotide phosphodiesterase class-III family. Requires Fe(2+) as cofactor.

In Ruthia magnifica subsp. Calyptogena magnifica, this protein is Probable cyclic nucleotide phosphodiesterase Rmag_0669.